The sequence spans 198 residues: MTLVPMVVEPTSRGERAYDIYTRLLKERIIFITGPIEDQMASLVVAQLIFLEAENPEKDISMYINSPGGVVTAGLSIYDTMQYVKPRIATLCLGQAASMGSLLLAAGEKGMRCALPNSRIMIHQPSGGFQGQATDIEIHAKEILNIKSRLNYIYVKHTGRELSEVVASMERDNFMSADSAQDFGIIDKVIEKRLDIEV.

Residue S98 is the Nucleophile of the active site. The active site involves H123.

It belongs to the peptidase S14 family. Fourteen ClpP subunits assemble into 2 heptameric rings which stack back to back to give a disk-like structure with a central cavity, resembling the structure of eukaryotic proteasomes.

The protein localises to the cytoplasm. It catalyses the reaction Hydrolysis of proteins to small peptides in the presence of ATP and magnesium. alpha-casein is the usual test substrate. In the absence of ATP, only oligopeptides shorter than five residues are hydrolyzed (such as succinyl-Leu-Tyr-|-NHMec, and Leu-Tyr-Leu-|-Tyr-Trp, in which cleavage of the -Tyr-|-Leu- and -Tyr-|-Trp bonds also occurs).. Its function is as follows. Cleaves peptides in various proteins in a process that requires ATP hydrolysis. Has a chymotrypsin-like activity. Plays a major role in the degradation of misfolded proteins. The sequence is that of ATP-dependent Clp protease proteolytic subunit from Ehrlichia ruminantium (strain Gardel).